The primary structure comprises 327 residues: DNA-directed RNA polymerase subunit alpha (327 aa).

The interval 1 to 233 (MVREKVKVST…NLFIPFLHVE (233 aa)) is alpha N-terminal domain (alpha-NTD). An alpha C-terminal domain (alpha-CTD) region spans residues 267–327 (LAFQYIFIDQ…KKILDILEKK (61 aa)).

It belongs to the RNA polymerase alpha chain family. In plastids the minimal PEP RNA polymerase catalytic core is composed of four subunits: alpha, beta, beta', and beta''. When a (nuclear-encoded) sigma factor is associated with the core the holoenzyme is formed, which can initiate transcription.

It localises to the plastid. The protein resides in the chloroplast. It carries out the reaction RNA(n) + a ribonucleoside 5'-triphosphate = RNA(n+1) + diphosphate. DNA-dependent RNA polymerase catalyzes the transcription of DNA into RNA using the four ribonucleoside triphosphates as substrates. The protein is DNA-directed RNA polymerase subunit alpha of Crucihimalaya wallichii (Rock-cress).